The following is a 93-amino-acid chain: Alpha-defensin 15 (93 aa).

Positions 1-19 are cleaved as a signal peptide; it reads MKTLVLLSALVLLAFQVQA. Residues 20–58 constitute a propeptide that is removed on maturation; that stretch reads DPIQNTDEETKTEEQPGEDDQAVSVSFGDPEGSSLQEES. Positions 23–56 are disordered; sequence QNTDEETKTEEQPGEDDQAVSVSFGDPEGSSLQE. 3 cysteine pairs are disulfide-bonded: cysteine 64–cysteine 92, cysteine 66–cysteine 81, and cysteine 71–cysteine 91.

This sequence belongs to the alpha-defensin family. In terms of tissue distribution, paneth cells of the small bowel.

It localises to the secreted. Probably contributes to the antimicrobial barrier function of the small bowel mucosa. This Mus musculus (Mouse) protein is Alpha-defensin 15 (Defa15).